The sequence spans 137 residues: Putative pre-16S rRNA nuclease (137 aa).

It belongs to the YqgF nuclease family.

It is found in the cytoplasm. Functionally, could be a nuclease involved in processing of the 5'-end of pre-16S rRNA. This is Putative pre-16S rRNA nuclease from Anaeromyxobacter sp. (strain Fw109-5).